The chain runs to 177 residues: Putative rubredoxin (177 aa).

Residues 1-38 form the Rubredoxin-like domain; the sequence is MKICRICGYQIPEGEFNLLEDGWVCPRCGVGKEELQDS. Fe cation contacts are provided by C4, C7, C25, and C28.

It belongs to the rubredoxin family. It depends on Fe(3+) as a cofactor.

This Methanothermobacter thermautotrophicus (strain ATCC 29096 / DSM 1053 / JCM 10044 / NBRC 100330 / Delta H) (Methanobacterium thermoautotrophicum) protein is Putative rubredoxin (rdxA).